The chain runs to 107 residues: Ribosome-associated factor Y (107 aa).

A disordered region spans residues 85 to 107 (LNKLQHKSESRRADERLKDSFEN).

As to quaternary structure, associates mainly with 70S ribosomes.

Functionally, during stationary phase, prevents 70S dimer formation, probably in order to regulate translation efficiency during transition between the exponential and the stationary phases. In addition, during environmental stress such as cold shock or excessive cell density at stationary phase, stabilizes the 70S ribosome against dissociation, inhibits translation initiation and increase translation accuracy. When normal growth conditions are restored, is quickly released from the ribosome. The protein is Ribosome-associated factor Y of Haemophilus influenzae (strain ATCC 51907 / DSM 11121 / KW20 / Rd).